Consider the following 477-residue polypeptide: MENQNQVKRNLKQRHITMIALGGTIGTGLFLTSGATISQAGPWGAVLAYCFIGIMVYFVMTSLGEMATYLPTSGSFSDYGGRYVDPAFGFALGWNYWLNGAITIAVDLTTAGLITQFWFPHLPSWIFSGIATVLIFIINVMAVGAFGETEYWLSTIKVITIVLFLAIGLLTIFGVLGQGNVDVVANLTAGNHGFVGGISGFVGVLLIAGFSFQGTEMLGITAGESEDPGKTIPKAMNSIFWRILLFYIFSIIVIAAIINFKDPRLLNPSSTAVMSPFTIVFKNIGFAVAASVMNAVILTSVISSANSVMYASTRILYSLGQEKGAPKFFGRTAKNGIPFYALLATTIICFIAFLTGIFGTQIYLFLIDLSSLTGFLAWLGISVSHIRFRRAYIAQGKKLEDLPYKAKWFPFGPIVALLMTGAIAINLDPAMLFSEHWGEGLALYAAIPIFIVLYFGYKWKYNTKIIPLEEVDLSREK.

Helical transmembrane passes span 16–36, 40–60, 86–106, 126–146, 156–176, 192–212, 238–258, 284–304, 337–359, 364–386, 408–428, and 437–457; these read ITMI…SGAT, AGPW…YFVM, PAFG…TIAV, IFSG…VGAF, IKVI…FGVL, HGFV…GFSF, SIFW…AAII, IGFA…VISS, IPFY…GIFG, LFLI…VSHI, WFPF…INLD, and WGEG…YFGY.

Belongs to the amino acid-polyamine-organocation (APC) superfamily. Amino acid transporter (AAT) (TC 2.A.3.1) family.

The protein resides in the cell membrane. Functionally, involved in histidine uptake. Has low affinity for arginine and lysine. Plays no significant role in the excretion of accumulated histidine. The protein is Histidine permease HisP of Lactococcus lactis subsp. cremoris (strain MG1363).